The chain runs to 393 residues: 4-hydroxyphenylpyruvate dioxygenase (393 aa).

An N-acetylthreonine modification is found at Thr-2. 2 VOC domains span residues 18-152 (HFHS…KMTF) and 180-338 (IIDH…IFTK). Position 183 (His-183) interacts with Fe cation. Ser-211, Ser-226, and Ser-250 each carry phosphoserine. Fe cation contacts are provided by His-266 and Glu-349.

Belongs to the 4HPPD family. Homodimer. Fe cation serves as cofactor. As to expression, liver.

The protein localises to the cytoplasm. Its subcellular location is the endoplasmic reticulum membrane. It is found in the golgi apparatus membrane. The catalysed reaction is 3-(4-hydroxyphenyl)pyruvate + O2 = homogentisate + CO2. It participates in amino-acid degradation; L-phenylalanine degradation; acetoacetate and fumarate from L-phenylalanine: step 3/6. Its function is as follows. Catalyzes the conversion of 4-hydroxyphenylpyruvic acid to homogentisic acid, one of the steps in tyrosine catabolism. The polypeptide is 4-hydroxyphenylpyruvate dioxygenase (HPD) (Sus scrofa (Pig)).